Reading from the N-terminus, the 126-residue chain is Small ribosomal subunit protein uS13 (126 aa).

The tract at residues 98–126 (PVRGQSTKNNARTRKGRKKTVANKKKATK) is disordered. A compositionally biased stretch (basic residues) spans 108 to 126 (ARTRKGRKKTVANKKKATK).

Belongs to the universal ribosomal protein uS13 family. As to quaternary structure, part of the 30S ribosomal subunit. Forms a loose heterodimer with protein S19. Forms two bridges to the 50S subunit in the 70S ribosome.

In terms of biological role, located at the top of the head of the 30S subunit, it contacts several helices of the 16S rRNA. In the 70S ribosome it contacts the 23S rRNA (bridge B1a) and protein L5 of the 50S subunit (bridge B1b), connecting the 2 subunits; these bridges are implicated in subunit movement. Contacts the tRNAs in the A and P-sites. The chain is Small ribosomal subunit protein uS13 from Bacteroides fragilis (strain ATCC 25285 / DSM 2151 / CCUG 4856 / JCM 11019 / LMG 10263 / NCTC 9343 / Onslow / VPI 2553 / EN-2).